Here is a 255-residue protein sequence, read N- to C-terminus: MRHPLVMGNWKLNGSTHMVNELIAGLRKELSTVDGCGVAIAPPAIYLNQAKHELAGSRIALGAQNVDVNLSGAFTGETSAEMLKDIGAQYIIIGHSERRTYHQESDELIAKKFGVLKEIGLIPVLCIGESEAENEAGQTEAVCAKQLDAVLNTLGVKAFEGAVIAYEPIWAIGTGKSATPAQAQAVHKFIRDHIAKQDAAVAAQVIIQYGGSVNDKNAAELFTQPDIDGALVGGASLKADAFAVIVKAAAKAKKA.

Substrate is bound at residue 9–11; sequence NWK. Catalysis depends on His-95, which acts as the Electrophile. Glu-167 serves as the catalytic Proton acceptor. Residues Gly-173, Ser-212, and 233 to 234 each bind substrate; that span reads GG.

The protein belongs to the triosephosphate isomerase family. As to quaternary structure, homodimer.

The protein localises to the cytoplasm. It carries out the reaction D-glyceraldehyde 3-phosphate = dihydroxyacetone phosphate. It participates in carbohydrate biosynthesis; gluconeogenesis. Its pathway is carbohydrate degradation; glycolysis; D-glyceraldehyde 3-phosphate from glycerone phosphate: step 1/1. In terms of biological role, involved in the gluconeogenesis. Catalyzes stereospecifically the conversion of dihydroxyacetone phosphate (DHAP) to D-glyceraldehyde-3-phosphate (G3P). This chain is Triosephosphate isomerase, found in Yersinia pseudotuberculosis serotype O:1b (strain IP 31758).